Here is a 142-residue protein sequence, read N- to C-terminus: Acidic phospholipase A2 KBf-grIB (142 aa).

Disulfide bonds link Cys28–Cys94, Cys44–Cys141, Cys46–Cys62, Cys61–Cys122, Cys68–Cys115, Cys78–Cys108, and Cys101–Cys113. Ca(2+) contacts are provided by Tyr45, Gly47, and Gly49. His65 is an active-site residue. Ca(2+) is bound at residue Asp66. Residue Asp116 is part of the active site.

The protein belongs to the phospholipase A2 family. Group I subfamily. D49 sub-subfamily. Ca(2+) is required as a cofactor. Expressed by the venom gland.

Its subcellular location is the secreted. The enzyme catalyses a 1,2-diacyl-sn-glycero-3-phosphocholine + H2O = a 1-acyl-sn-glycero-3-phosphocholine + a fatty acid + H(+). In terms of biological role, PLA2 catalyzes the calcium-dependent hydrolysis of the 2-acyl groups in 3-sn-phosphoglycerides. This is Acidic phospholipase A2 KBf-grIB from Bungarus fasciatus (Banded krait).